A 374-amino-acid polypeptide reads, in one-letter code: Heme A synthase (374 aa).

The interval 1–22 is disordered; sequence MSDHIRAASSPSRHGSEHGWQH. 5 helical membrane-spanning segments follow: residues 32-52, 118-138, 149-169, 184-204, and 226-246; these read ILVATWMFTLCFMILVMVMLG, RLWGRLIGLVLLLPLIFLAVT, LILIFVLGGLQGAVGWFMVAS, VVHLSFALLLYSALLWTALSV, and LGLVCITIIAGGFVAGIHAGL. His-281 lines the heme pocket. The next 3 membrane-spanning stretches (helical) occupy residues 283–300, 309–329, and 332–352; these read LLATLTALTALLTGLIGF, AVLPLMVAVILQYALGIATLL, and VAVPVAVVHQGMAVLLLTAAI. Residue His-340 participates in heme binding.

The protein belongs to the COX15/CtaA family. Type 2 subfamily. As to quaternary structure, interacts with CtaB. Heme b is required as a cofactor.

It localises to the cell membrane. The enzyme catalyses Fe(II)-heme o + 2 A + H2O = Fe(II)-heme a + 2 AH2. Its pathway is porphyrin-containing compound metabolism; heme A biosynthesis; heme A from heme O: step 1/1. In terms of biological role, catalyzes the conversion of heme O to heme A by two successive hydroxylations of the methyl group at C8. The first hydroxylation forms heme I, the second hydroxylation results in an unstable dihydroxymethyl group, which spontaneously dehydrates, resulting in the formyl group of heme A. This chain is Heme A synthase, found in Granulibacter bethesdensis (strain ATCC BAA-1260 / CGDNIH1).